The following is a 26-amino-acid chain: Turripeptide OL57 (26 aa).

In terms of processing, contains 2 disulfide bonds. Expressed by the venom duct.

It is found in the secreted. Its function is as follows. Acts as a neurotoxin by inhibiting an ion channel. The sequence is that of Turripeptide OL57 from Iotyrris olangoensis (Sea snail).